Consider the following 1407-residue polypeptide: DNA-directed RNA polymerase subunit beta' (1407 aa).

4 residues coordinate Zn(2+): Cys70, Cys72, Cys85, and Cys88. 3 residues coordinate Mg(2+): Asp460, Asp462, and Asp464. Zn(2+) contacts are provided by Cys814, Cys888, Cys895, and Cys898. An N6-acetyllysine modification is found at Lys972.

This sequence belongs to the RNA polymerase beta' chain family. As to quaternary structure, the RNAP catalytic core consists of 2 alpha, 1 beta, 1 beta' and 1 omega subunit. When a sigma factor is associated with the core the holoenzyme is formed, which can initiate transcription. The cofactor is Mg(2+). It depends on Zn(2+) as a cofactor.

It carries out the reaction RNA(n) + a ribonucleoside 5'-triphosphate = RNA(n+1) + diphosphate. In terms of biological role, DNA-dependent RNA polymerase catalyzes the transcription of DNA into RNA using the four ribonucleoside triphosphates as substrates. This is DNA-directed RNA polymerase subunit beta' from Shigella dysenteriae serotype 1 (strain Sd197).